Consider the following 518-residue polypeptide: Protease Do-like 4, mitochondrial (518 aa).

Residues 1-23 (MLFRFLQTLARFCRFLLISVLGF) constitute a mitochondrion transit peptide. The serine protease stretch occupies residues 98-262 (ESGGSGFVIS…IPTPVIKHFL (165 aa)). Catalysis depends on charge relay system residues His116, Asp147, and Ser225. The 81-residue stretch at 278–358 (DISYQLMENS…HFVSMKKLDE (81 aa)) folds into the PDZ domain.

It belongs to the peptidase S1C family.

The protein localises to the mitochondrion membrane. Putative serine protease. This is Protease Do-like 4, mitochondrial (DEGP4) from Arabidopsis thaliana (Mouse-ear cress).